The chain runs to 307 residues: Probable rRNA-processing protein EBP2 homolog (307 aa).

3 disordered regions span residues 1–22 (MSDFEMEDSASGYDSGDNSDAE), 189–208 (QRKMGKMLAKQTKVQREAEK), and 236–307 (ESKQ…KGRK). A coiled-coil region spans residues 205–252 (EAEKKDMLDKLKKFRKGKLKNLDFLEDAKALESKQKQSAENRKKRNKK). The segment covering 236–245 (ESKQKQSAEN) has biased composition (basic and acidic residues). Composition is skewed to basic residues over residues 246–266 (RKKRNKKFGFGGKKKGLKRNT) and 294–307 (RLGKSRRIKAKGRK).

Belongs to the EBP2 family.

Its subcellular location is the nucleus. It is found in the nucleolus. Required for the processing of the 27S pre-rRNA. In Drosophila melanogaster (Fruit fly), this protein is Probable rRNA-processing protein EBP2 homolog.